Reading from the N-terminus, the 430-residue chain is Drebrin-like protein (430 aa).

One can recognise an ADF-H domain in the interval 4-133 (NLSRNGPALQ…EPECIMEKVA (130 aa)). Threonine 26 carries the post-translational modification Phosphothreonine. Residues glycine 137 and serine 160 each carry the phosphoserine modification. Lysine 176 carries the post-translational modification N6-acetyllysine. A coiled-coil region spans residues 176–231 (KDSFWAKAEKEEENRRLEEKRRAEEAQRQLEQERRERELREAARREQRYQEQGGEA). Phosphoserine is present on residues alanine 183 and serine 232. Residues 219-283 (RREQRYQEQG…SSPQPGKLRS (65 aa)) are disordered. Positions 233–244 (PQRTWEQQQEVV) are enriched in polar residues. A compositionally biased stretch (basic and acidic residues) spans 245-267 (SRNRNEQESAVHPREIFKQKERA). Polar residues predominate over residues 268 to 277 (MSTTSISSPQ). Serine 269, serine 272, serine 275, and serine 283 each carry phosphoserine. Lysine 288 carries the N6-acetyllysine modification. Threonine 291 bears the Phosphothreonine mark. Phosphotyrosine is present on residues tyrosine 334 and tyrosine 344. An SH3 domain is found at 371 to 430 (GQGLCARALYDYQAADDTEISFDPENLITGIEVIDEGWWRGYGPDGHFGMFPANYVELIE).

It belongs to the ABP1 family. Interacts with SHANK2, SHANK3 and SYN1. Interacts with FGD1 and DNM1. Interacts with ANKRD54. Interacts with COBL. Interacts with WASL and WIPF1. Interacts with MAP4K1 and PRAM1. In terms of processing, degraded by caspases during apoptosis.

The protein localises to the cytoplasm. Its subcellular location is the cytoskeleton. The protein resides in the cell projection. It localises to the lamellipodium. It is found in the ruffle. The protein localises to the cell cortex. Its subcellular location is the cytosol. The protein resides in the synapse. It localises to the perikaryon. It is found in the neuron projection. The protein localises to the cell membrane. Its subcellular location is the cytoplasmic vesicle. The protein resides in the clathrin-coated vesicle membrane. It localises to the golgi apparatus membrane. It is found in the podosome. The protein localises to the early endosome. Its subcellular location is the dendrite. The protein resides in the postsynaptic density. Its function is as follows. Adapter protein that binds F-actin and DNM1, and thereby plays a role in receptor-mediated endocytosis. Plays a role in the reorganization of the actin cytoskeleton, formation of cell projections, such as neurites, in neuron morphogenesis and synapse formation via its interaction with WASL and COBL. Does not bind G-actin and promote actin polymerization by itself. Required for the formation of organized podosome rosettes. May act as a common effector of antigen receptor-signaling pathways in leukocytes. Acts as a key component of the immunological synapse that regulates T-cell activation by bridging TCRs and the actin cytoskeleton to gene activation and endocytic processes. This chain is Drebrin-like protein (DBNL), found in Homo sapiens (Human).